A 295-amino-acid polypeptide reads, in one-letter code: Microcin B17-processing protein McbB (295 aa).

The protein localises to the cytoplasm. Functionally, necessary to process the inactive microcin B17 (McbA) precursor into the active peptide. The chain is Microcin B17-processing protein McbB (mcbB) from Escherichia coli.